The following is a 169-amino-acid chain: Secreted RxLR effector protein BLN03 (169 aa).

The N-terminal stretch at 1–21 (MRPRKYIVVVLLSIAYTMCLA) is a signal peptide. The short motif at 51–54 (TEER) is the dEER element. The chain crosses the membrane as a helical span at residues 149–169 (GSAFLFVIGFIVLLAFAMTAV).

This sequence belongs to the RxLR effector family. Interacts with host transcription factor NAC069.

It is found in the secreted. It localises to the host membrane. Its function is as follows. Secreted effector that inhibits stress-induced relocalization of the endoplasmic reticulum tail-anchored transcription factors to the nucleus, thus affecting stress responses. The protein is Secreted RxLR effector protein BLN03 of Bremia lactucae (Lettuce downy mildew).